Consider the following 220-residue polypeptide: Pyridoxine/pyridoxamine 5'-phosphate oxidase (220 aa).

Substrate-binding positions include 13–16 (RVEY) and Lys-77. FMN is bound by residues 72-77 (RTVLCK), 87-88 (FT), Lys-94, and Gln-116. The substrate site is built by Tyr-134, Arg-138, and Ser-142. FMN contacts are provided by residues 151–152 (QS) and Trp-197. Residue 203–205 (RLH) coordinates substrate. Position 207 (Arg-207) interacts with FMN.

This sequence belongs to the pyridoxamine 5'-phosphate oxidase family. Homodimer. It depends on FMN as a cofactor.

It catalyses the reaction pyridoxamine 5'-phosphate + O2 + H2O = pyridoxal 5'-phosphate + H2O2 + NH4(+). It carries out the reaction pyridoxine 5'-phosphate + O2 = pyridoxal 5'-phosphate + H2O2. It participates in cofactor metabolism; pyridoxal 5'-phosphate salvage; pyridoxal 5'-phosphate from pyridoxamine 5'-phosphate: step 1/1. The protein operates within cofactor metabolism; pyridoxal 5'-phosphate salvage; pyridoxal 5'-phosphate from pyridoxine 5'-phosphate: step 1/1. In terms of biological role, catalyzes the oxidation of either pyridoxine 5'-phosphate (PNP) or pyridoxamine 5'-phosphate (PMP) into pyridoxal 5'-phosphate (PLP). The protein is Pyridoxine/pyridoxamine 5'-phosphate oxidase of Mycolicibacterium paratuberculosis (strain ATCC BAA-968 / K-10) (Mycobacterium paratuberculosis).